A 241-amino-acid chain; its full sequence is Dephospho-CoA kinase CAB5 (241 aa).

The 209-residue stretch at 3–211 (VVGLTGGIAC…PSKLRTVLEY (209 aa)) folds into the DPCK domain. 8–15 (GGIACGKS) serves as a coordination point for ATP.

Belongs to the CoaE family.

Its subcellular location is the endoplasmic reticulum. It localises to the mitochondrion. The protein resides in the nucleus. It carries out the reaction 3'-dephospho-CoA + ATP = ADP + CoA + H(+). It participates in cofactor biosynthesis; coenzyme A biosynthesis; CoA from (R)-pantothenate: step 5/5. In terms of biological role, catalyzes the phosphorylation of the 3'-hydroxyl group of dephosphocoenzyme A to form coenzyme A. The chain is Dephospho-CoA kinase CAB5 (CAB5) from Saccharomyces cerevisiae (strain ATCC 204508 / S288c) (Baker's yeast).